The primary structure comprises 145 residues: Small ribosomal subunit protein eS19 (145 aa).

Lys-23 is modified (N6-acetyllysine). At Arg-67 the chain carries Omega-N-methylarginine. 2 positions are modified to N6-acetyllysine: Lys-111 and Lys-115. Lys-143 carries the N6-succinyllysine modification.

This sequence belongs to the eukaryotic ribosomal protein eS19 family. As to quaternary structure, component of the small ribosomal subunit. Part of the small subunit (SSU) processome, composed of more than 70 proteins and the RNA chaperone small nucleolar RNA (snoRNA) U3. Interacts with RPS19BP1; the interaction is direct and mediates the integration of RPS19 in state post-A1. Interacts with RPS19BP1.

It is found in the cytoplasm. It localises to the nucleus. Its subcellular location is the nucleolus. In terms of biological role, component of the small ribosomal subunit. The ribosome is a large ribonucleoprotein complex responsible for the synthesis of proteins in the cell. Required for pre-rRNA processing and maturation of 40S ribosomal subunits. Part of the small subunit (SSU) processome, first precursor of the small eukaryotic ribosomal subunit. During the assembly of the SSU processome in the nucleolus, many ribosome biogenesis factors, an RNA chaperone and ribosomal proteins associate with the nascent pre-rRNA and work in concert to generate RNA folding, modifications, rearrangements and cleavage as well as targeted degradation of pre-ribosomal RNA by the RNA exosome. This is Small ribosomal subunit protein eS19 (RPS19) from Pongo abelii (Sumatran orangutan).